The following is a 430-amino-acid chain: Sorting nexin-30 (430 aa).

Polar residues predominate over residues 1–18 (MSNGGTPRSLPSSGQKSI). Positions 1-66 (MSNGGTPRSL…SSPASSSSLL (66 aa)) are disordered. Residues 57–66 (SSPASSSSLL) show a composition bias toward low complexity. The PX domain maps to 80–201 (RDLFVTVDDP…AFLSAKDLNK (122 aa)). A 1,2-diacyl-sn-glycero-3-phospho-(1D-myo-inositol-3-phosphate)-binding residues include Arg123, Gln125, Lys153, and Arg167. Positions 223–428 (KLRGRPVEFA…LQDKQDAKGE (206 aa)) constitute a BAR domain.

It belongs to the sorting nexin family.

It is found in the early endosome membrane. Involved in the regulation of endocytosis and in several stages of intracellular trafficking. Together with snx4, involved in autophagosome assembly. This is Sorting nexin-30 (snx30) from Danio rerio (Zebrafish).